Here is a 355-residue protein sequence, read N- to C-terminus: F-box only protein 32 (355 aa).

Residues 62 to 67 carry the Nuclear localization signal motif; that stretch reads KKRKKD. Residues 169 to 173 carry the Nuclear export signal motif; the sequence is LLQTL. The F-box domain maps to 223 to 271; that stretch reads LTFTDLPLCLQLNIMQRLSDGRDLVSLGQAAPDLHVLSEDRLLWKKLCQ. The Bipartite nuclear localization signal motif lies at 280 to 295; that stretch reads RKRLILSDKGQLDWKK.

As to quaternary structure, part of the SCF (SKP1-CUL1-F-box) E3 ubiquitin-protein ligase complex SCF(FBXO32) formed of CUL1, SKP1, RBX1 and FBXO32. Specifically expressed in cardiac and skeletal muscle.

It localises to the cytoplasm. The protein localises to the nucleus. Its pathway is protein modification; protein ubiquitination. Functionally, substrate recognition component of a SCF (SKP1-CUL1-F-box protein) E3 ubiquitin-protein ligase complex which mediates the ubiquitination and subsequent proteasomal degradation of target proteins. Probably recognizes and binds to phosphorylated target proteins during skeletal muscle atrophy. Recognizes TERF1. The sequence is that of F-box only protein 32 (FBXO32) from Homo sapiens (Human).